The following is a 227-amino-acid chain: Orotidine 5'-phosphate decarboxylase (227 aa).

Substrate contacts are provided by residues aspartate 8, lysine 30, 59-68 (DLKLYDIPYT), threonine 118, arginine 178, glutamine 187, glycine 207, and arginine 208. Lysine 61 (proton donor) is an active-site residue.

The protein belongs to the OMP decarboxylase family. Type 1 subfamily. In terms of assembly, homodimer.

It carries out the reaction orotidine 5'-phosphate + H(+) = UMP + CO2. It participates in pyrimidine metabolism; UMP biosynthesis via de novo pathway; UMP from orotate: step 2/2. Catalyzes the decarboxylation of orotidine 5'-monophosphate (OMP) to uridine 5'-monophosphate (UMP). This Helicobacter pylori (strain Shi470) protein is Orotidine 5'-phosphate decarboxylase.